The sequence spans 347 residues: NADH-ubiquinone oxidoreductase chain 2 (347 aa).

11 consecutive transmembrane segments (helical) span residues 3-23 (PPIL…VLTS), 25-45 (HWML…PILM), 59-79 (YFLM…INLL), 96-116 (TLMT…FWVP), 122-142 (ISLS…LSVL), 153-173 (LLLL…LNQT), 178-198 (ILAY…IYNP), 200-220 (MMLL…MLFM), 237-257 (MPLI…LPPL), 274-294 (EMII…YFYM), and 325-345 (FLPP…IISI).

Belongs to the complex I subunit 2 family. In terms of assembly, core subunit of respiratory chain NADH dehydrogenase (Complex I) which is composed of 45 different subunits. Interacts with TMEM242.

It localises to the mitochondrion inner membrane. It carries out the reaction a ubiquinone + NADH + 5 H(+)(in) = a ubiquinol + NAD(+) + 4 H(+)(out). Core subunit of the mitochondrial membrane respiratory chain NADH dehydrogenase (Complex I) which catalyzes electron transfer from NADH through the respiratory chain, using ubiquinone as an electron acceptor. Essential for the catalytic activity and assembly of complex I. This chain is NADH-ubiquinone oxidoreductase chain 2, found in Paradoxurus hermaphroditus (Asian palm civet).